Here is a 246-residue protein sequence, read N- to C-terminus: rRNA methyltransferase 2, mitochondrial (246 aa).

The N-terminal 18 residues, 1 to 18 (MAGYLKLVCVSFQRQGFH), are a transit peptide targeting the mitochondrion. S-adenosyl-L-methionine-binding positions include 83–86 (PGAW), Asp112, 129–130 (DV), and Asp154. Lys194 functions as the Proton acceptor in the catalytic mechanism.

This sequence belongs to the class I-like SAM-binding methyltransferase superfamily. RNA methyltransferase RlmE family. Widely expressed, with highest expression in muscle, placenta, and heart.

It localises to the mitochondrion. The enzyme catalyses uridine(1369) in 16S rRNA + S-adenosyl-L-methionine = 2'-O-methyluridine(1369) in 16S rRNA + S-adenosyl-L-homocysteine + H(+). S-adenosyl-L-methionine-dependent 2'-O-ribose methyltransferase that catalyzes the formation of 2'-O-methyluridine at position 1369 (Um1369) in the 16S mitochondrial large subunit ribosomal RNA (mtLSU rRNA), a universally conserved modification in the peptidyl transferase domain of the mtLSU rRNA. This activity may require prior 2'-O-methylguanosine modification at position 1370 (Gm1370) by MRM3. Essential for late-stage assembly of mtLSU required for efficient translation of mitochondrial DNA encoded proteins; methyltransferase activity is not required for this function. Essential for mitochondrial respiratory function. The protein is rRNA methyltransferase 2, mitochondrial of Homo sapiens (Human).